A 514-amino-acid chain; its full sequence is Maturase K (514 aa).

The protein belongs to the intron maturase 2 family. MatK subfamily.

The protein localises to the plastid. Its subcellular location is the chloroplast. In terms of biological role, usually encoded in the trnK tRNA gene intron. Probably assists in splicing its own and other chloroplast group II introns. The protein is Maturase K of Zamia integrifolia (Coontie).